Consider the following 899-residue polypeptide: Translation initiation factor IF-2 (899 aa).

Disordered regions lie at residues 31–227 (KKAE…ATEQ) and 240–310 (VTTS…GFDK). Polar residues-rich tracts occupy residues 36 to 47 (NVSQTEKQSLLS) and 73 to 87 (STLSVAGTGGKSKSV). Basic and acidic residues-rich tracts occupy residues 101–173 (SALE…EKAK), 181–219 (AKSETELLQLRREEEAKRKAEEDSQRQLEEARKMAETNE), and 247–261 (RAAEDEQDRKEETTG). A compositionally biased stretch (polar residues) spans 296-308 (PQVNAPTSMQQGF). One can recognise a tr-type G domain in the interval 398–565 (SRAPVVTIMG…AILLQSEILE (168 aa)). The tract at residues 407–414 (GHVDHGKT) is G1. Position 407–414 (407–414 (GHVDHGKT)) interacts with GTP. Residues 432–436 (GITQH) form a G2 region. The segment at 453–456 (DTPG) is G3. Residues 453–457 (DTPGH) and 507–510 (NKID) each bind GTP. The interval 507-510 (NKID) is G4. The segment at 543–545 (SAK) is G5.

The protein belongs to the TRAFAC class translation factor GTPase superfamily. Classic translation factor GTPase family. IF-2 subfamily.

Its subcellular location is the cytoplasm. In terms of biological role, one of the essential components for the initiation of protein synthesis. Protects formylmethionyl-tRNA from spontaneous hydrolysis and promotes its binding to the 30S ribosomal subunits. Also involved in the hydrolysis of GTP during the formation of the 70S ribosomal complex. The protein is Translation initiation factor IF-2 of Photobacterium profundum (strain SS9).